A 138-amino-acid polypeptide reads, in one-letter code: Putative nickel-responsive regulator (138 aa).

Ni(2+)-binding residues include H76, H87, H89, and C95.

This sequence belongs to the transcriptional regulatory CopG/NikR family. Ni(2+) serves as cofactor.

In terms of biological role, transcriptional regulator. In Pseudomonas putida (strain ATCC 47054 / DSM 6125 / CFBP 8728 / NCIMB 11950 / KT2440), this protein is Putative nickel-responsive regulator.